The sequence spans 508 residues: Glycerol kinase (508 aa).

Threonine 14 contacts ADP. Threonine 14, threonine 15, and serine 16 together coordinate ATP. Threonine 14 lines the sn-glycerol 3-phosphate pocket. Arginine 18 serves as a coordination point for ADP. Residues arginine 84, glutamate 85, and tyrosine 136 each coordinate sn-glycerol 3-phosphate. Glycerol contacts are provided by arginine 84, glutamate 85, and tyrosine 136. Histidine 232 is subject to Phosphohistidine; by HPr. Aspartate 246 is a binding site for sn-glycerol 3-phosphate. Glycerol is bound by residues aspartate 246 and glutamine 247. 2 residues coordinate ADP: threonine 268 and glycine 311. Positions 268, 311, 315, and 412 each coordinate ATP. Residues glycine 412 and asparagine 416 each coordinate ADP.

It belongs to the FGGY kinase family. As to quaternary structure, homotetramer and homodimer (in equilibrium). In terms of processing, the phosphoenolpyruvate-dependent sugar phosphotransferase system (PTS), including enzyme I, and histidine-containing protein (HPr) are required for the phosphorylation, which leads to the activation of the enzyme.

It catalyses the reaction glycerol + ATP = sn-glycerol 3-phosphate + ADP + H(+). Its pathway is polyol metabolism; glycerol degradation via glycerol kinase pathway; sn-glycerol 3-phosphate from glycerol: step 1/1. Its activity is regulated as follows. Activated by phosphorylation and inhibited by fructose 1,6-bisphosphate (FBP). Key enzyme in the regulation of glycerol uptake and metabolism. Catalyzes the phosphorylation of glycerol to yield sn-glycerol 3-phosphate. The protein is Glycerol kinase of Streptococcus pyogenes serotype M3 (strain ATCC BAA-595 / MGAS315).